Consider the following 233-residue polypeptide: Superoxide dismutase [Mn], mitochondrial (233 aa).

The transit peptide at M1–T26 directs the protein to the mitochondrion. 2 residues coordinate Mn(2+): H52 and H107. Phosphothreonine is present on residues T147 and T149. Mn(2+) is bound by residues D194 and H198.

It belongs to the iron/manganese superoxide dismutase family. In terms of assembly, homotetramer. Requires Mn(2+) as cofactor.

It localises to the mitochondrion matrix. The enzyme catalyses 2 superoxide + 2 H(+) = H2O2 + O2. Functionally, destroys superoxide anion radicals which are normally produced within the cells and which are toxic to biological systems. This is Superoxide dismutase [Mn], mitochondrial (SOD2) from Saccharomyces cerevisiae (strain ATCC 204508 / S288c) (Baker's yeast).